The primary structure comprises 305 residues: Ribosomal protein L11 methyltransferase (305 aa).

S-adenosyl-L-methionine is bound by residues Thr-149, Gly-176, Asp-198, and Asn-240.

This sequence belongs to the methyltransferase superfamily. PrmA family.

The protein localises to the cytoplasm. It carries out the reaction L-lysyl-[protein] + 3 S-adenosyl-L-methionine = N(6),N(6),N(6)-trimethyl-L-lysyl-[protein] + 3 S-adenosyl-L-homocysteine + 3 H(+). Its function is as follows. Methylates ribosomal protein L11. The chain is Ribosomal protein L11 methyltransferase from Trichlorobacter lovleyi (strain ATCC BAA-1151 / DSM 17278 / SZ) (Geobacter lovleyi).